Reading from the N-terminus, the 208-residue chain is Photosystem I reaction center subunit II-1, chloroplastic (208 aa).

The N-terminal 45 residues, 1 to 45 (MATQAAGIFNSAITTAATSGVKKLHFFSTTHRPKSLSFTKTAIRA), are a transit peptide targeting the chloroplast. The residue at position 48 (threonine 48) is a Phosphothreonine. The segment at 49–72 (DSSAAAAAAPATKEAPVGFTPPQL) is disordered. Over residues 50 to 64 (SSAAAAAAPATKEAP) the composition is skewed to low complexity. Residues 141 to 149 (RLRSKYKIT) form a ferredoxin and ferredoxin-oxidoreductase binding region.

It belongs to the PsaD family. In terms of assembly, interacts with PGRL1A and PGRL1B. In terms of processing, phosphorylated by a threonine specific thylakoid kinase in a light activated and redox-dependent manner.

It localises to the plastid. It is found in the chloroplast thylakoid membrane. Its function is as follows. PsaD can form complexes with ferredoxin and ferredoxin-oxidoreductase in photosystem I (PS I) reaction center. PSAD may encode the ferredoxin-docking protein. This is Photosystem I reaction center subunit II-1, chloroplastic (psaD1) from Arabidopsis thaliana (Mouse-ear cress).